The sequence spans 272 residues: tRNA pseudouridine synthase B (272 aa).

Aspartate 38 serves as the catalytic Nucleophile.

Belongs to the pseudouridine synthase TruB family. Type 1 subfamily.

The enzyme catalyses uridine(55) in tRNA = pseudouridine(55) in tRNA. Functionally, responsible for synthesis of pseudouridine from uracil-55 in the psi GC loop of transfer RNAs. The polypeptide is tRNA pseudouridine synthase B (Campylobacter jejuni subsp. jejuni serotype O:6 (strain 81116 / NCTC 11828)).